Reading from the N-terminus, the 132-residue chain is Interleukin-4 (132 aa).

A signal peptide spans 1–24; it reads MGLTSQLIPTLVCLLALTSTFVHG. 4 N-linked (GlcNAc...) asparagine glycosylation sites follow: Asn-28, Asn-45, Asn-62, and Asn-101. Intrachain disulfides connect Cys-48-Cys-84 and Cys-70-Cys-104.

Belongs to the IL-4/IL-13 family.

Its subcellular location is the secreted. Participates in at least several B-cell activation processes as well as of other cell types. It is a costimulator of DNA-synthesis. It induces the expression of class II MHC molecules on resting B-cells. It enhances both secretion and cell surface expression of IgE and IgG1. It also regulates the expression of the low affinity Fc receptor for IgE (CD23) on both lymphocytes and monocytes. Positively regulates IL31RA expression in macrophages. Stimulates autophagy in dendritic cells by interfering with mTORC1 signaling and through the induction of RUFY4. This chain is Interleukin-4 (IL4), found in Ailuropoda melanoleuca (Giant panda).